Reading from the N-terminus, the 445-residue chain is Zinc finger protein SHOOT GRAVITROPISM 5 (445 aa).

Over residues 22 to 31 (SSSDPFLSSS) the composition is skewed to low complexity. The segment at 22-59 (SSSDPFLSSSENGVTTTNTSTQKRKRRPAGTPDPDAEV) is disordered. Over residues 32 to 42 (ENGVTTTNTST) the composition is skewed to polar residues. C2H2-type zinc fingers lie at residues 73-95 (YICE…RRRH), 115-145 (YVCP…RRKH), and 151-178 (WVCE…TRGH). Zn(2+) is bound by residues cysteine 153, cysteine 156, histidine 169, cysteine 173, cysteine 180, cysteine 182, histidine 195, and cysteine 199. The CCHC-type 2; atypical zinc-finger motif lies at 178-201 (HSCDCGRVFSRVESFIEHQDNCSA). The tract at residues 188-200 (RVESFIEHQDNCS) is SHR-binding. Disordered regions lie at residues 203 to 253 (RVHR…LEGR) and 281 to 314 (SSNQ…LNLS). The segment covering 214 to 248 (TAVTVPACSSRTASTVSTPSSETNYGGTVAVTTPQ) has biased composition (polar residues). Low complexity predominate over residues 281–293 (SSNQNPNQENQQQ). The stretch at 340–397 (MKIAMKEKAYAEEAKREAKRQREIAENEFANAKKIRQKAQAELERAKFLKEQSMKKIS) forms a coiled coil.

In terms of tissue distribution, mainly expressed in the endodermis, the gravity-sensing tissue in inflorescence stems. Mostly present in stems and flowers, and, to a lower extent, in seedlings, hypocotyls, roots and the shoot apical meristem (SAM).

It is found in the nucleus. In terms of biological role, transcription factor involved in inflorescence stems gravitropism, probably by regulating starch accumulation in amyloplasts of graviperceptive cells. Required for stem circumnutation movements. Regulates lateral organ morphogenesis and gravitropic responses. Acts cooperatively with IDD16 to control silique and branche orientation. Involved in the establishment of auxin gradients through the regulation of auxin biosynthesis and transport. The protein is Zinc finger protein SHOOT GRAVITROPISM 5 of Arabidopsis thaliana (Mouse-ear cress).